We begin with the raw amino-acid sequence, 407 residues long: D-inositol 3-phosphate glycosyltransferase (407 aa).

Residue H2 coordinates 1D-myo-inositol 3-phosphate. Residues 8–9 (QP) and G16 contribute to the UDP-N-acetyl-alpha-D-glucosamine site. 1D-myo-inositol 3-phosphate contacts are provided by residues 13–18 (DAGGLN), R71, Y104, T128, and R148. R222 and K227 together coordinate UDP-N-acetyl-alpha-D-glucosamine. Mg(2+) is bound by residues Y297, R298, and A300. UDP-N-acetyl-alpha-D-glucosamine contacts are provided by E310 and E318. T324 lines the Mg(2+) pocket.

This sequence belongs to the glycosyltransferase group 1 family. MshA subfamily. As to quaternary structure, homodimer.

The catalysed reaction is 1D-myo-inositol 3-phosphate + UDP-N-acetyl-alpha-D-glucosamine = 1D-myo-inositol 2-acetamido-2-deoxy-alpha-D-glucopyranoside 3-phosphate + UDP + H(+). Catalyzes the transfer of a N-acetyl-glucosamine moiety to 1D-myo-inositol 3-phosphate to produce 1D-myo-inositol 2-acetamido-2-deoxy-glucopyranoside 3-phosphate in the mycothiol biosynthesis pathway. This Frankia alni (strain DSM 45986 / CECT 9034 / ACN14a) protein is D-inositol 3-phosphate glycosyltransferase.